A 256-amino-acid chain; its full sequence is Thiazole synthase (256 aa).

The active-site Schiff-base intermediate with DXP is the Lys95. Residues Gly156, Ala182–Gly183, and Asn204–Thr205 each bind 1-deoxy-D-xylulose 5-phosphate.

Belongs to the ThiG family. Homotetramer. Forms heterodimers with either ThiH or ThiS.

The protein resides in the cytoplasm. The enzyme catalyses [ThiS sulfur-carrier protein]-C-terminal-Gly-aminoethanethioate + 2-iminoacetate + 1-deoxy-D-xylulose 5-phosphate = [ThiS sulfur-carrier protein]-C-terminal Gly-Gly + 2-[(2R,5Z)-2-carboxy-4-methylthiazol-5(2H)-ylidene]ethyl phosphate + 2 H2O + H(+). It participates in cofactor biosynthesis; thiamine diphosphate biosynthesis. In terms of biological role, catalyzes the rearrangement of 1-deoxy-D-xylulose 5-phosphate (DXP) to produce the thiazole phosphate moiety of thiamine. Sulfur is provided by the thiocarboxylate moiety of the carrier protein ThiS. In vitro, sulfur can be provided by H(2)S. This Salmonella agona (strain SL483) protein is Thiazole synthase.